A 337-amino-acid polypeptide reads, in one-letter code: Zinc finger protein Gfi-1b (337 aa).

The mediates repression of transcription stretch occupies residues 1–20 (MPRSFLVKSKKAHTYHQHRF). The interval 1–20 (MPRSFLVKSKKAHTYHQHRF) is SNAG domain. 6 consecutive C2H2-type zinc fingers follow at residues 170–193 (YHCV…RRSH), 199–221 (FACE…TNIH), 227–249 (FECK…LLIH), 255–277 (YPCQ…TYIH), 283–305 (HKCQ…SRKH), and 311–334 (FSCE…ETQH).

Expressed in erythroid cells of primitive and definitive lineage and bone marrow cells.

It is found in the nucleus. In terms of biological role, essential transcriptional regulator necessary for development and differentiation of erythroid and megakaryocytic lineages. Alters histone methylation by recruiting histone methyltransferase to target genes promoters. Plays a role in heterochromatin formation. In Gallus gallus (Chicken), this protein is Zinc finger protein Gfi-1b (GFI1B).